Here is a 510-residue protein sequence, read N- to C-terminus: NAD(P)H-quinone oxidoreductase subunit 2 A, chloroplastic (510 aa).

Transmembrane regions (helical) follow at residues Leu24–Leu44, Trp59–Trp79, Ile99–Ile119, Met124–Cys144, Leu149–Tyr169, Tyr183–Gly203, Ile229–Phe249, Trp295–Ile315, Met323–Asp343, Gly347–Ala367, Ala395–Phe415, Leu418–Leu438, and Met484–Ile504.

It belongs to the complex I subunit 2 family. In terms of assembly, NDH is composed of at least 16 different subunits, 5 of which are encoded in the nucleus.

The protein resides in the plastid. Its subcellular location is the chloroplast thylakoid membrane. It carries out the reaction a plastoquinone + NADH + (n+1) H(+)(in) = a plastoquinol + NAD(+) + n H(+)(out). The catalysed reaction is a plastoquinone + NADPH + (n+1) H(+)(in) = a plastoquinol + NADP(+) + n H(+)(out). In terms of biological role, NDH shuttles electrons from NAD(P)H:plastoquinone, via FMN and iron-sulfur (Fe-S) centers, to quinones in the photosynthetic chain and possibly in a chloroplast respiratory chain. The immediate electron acceptor for the enzyme in this species is believed to be plastoquinone. Couples the redox reaction to proton translocation, and thus conserves the redox energy in a proton gradient. The sequence is that of NAD(P)H-quinone oxidoreductase subunit 2 A, chloroplastic from Amborella trichopoda.